Consider the following 116-residue polypeptide: Nucleoid-associated protein A9601_00191 (116 aa).

Belongs to the YbaB/EbfC family. In terms of assembly, homodimer.

The protein localises to the cytoplasm. It is found in the nucleoid. Binds to DNA and alters its conformation. May be involved in regulation of gene expression, nucleoid organization and DNA protection. This chain is Nucleoid-associated protein A9601_00191, found in Prochlorococcus marinus (strain AS9601).